A 292-amino-acid polypeptide reads, in one-letter code: Probable endonuclease LCL3 (292 aa).

A helical membrane pass occupies residues 41 to 58; the sequence is YFSVAAFAAGSLSLAASY. Residues 83–247 enclose the TNase-like domain; sequence RWIKGRVTSV…KDARRGIWAK (165 aa). The active site involves Arg132. Asp137 provides a ligand contact to Ca(2+). Active-site residues include Glu140 and Arg180. The disordered stretch occupies residues 256–282; sequence EYKRRYAQAADGGEPPSKARAEKEQKR. Over residues 272–282 the composition is skewed to basic and acidic residues; sequence SKARAEKEQKR.

The protein belongs to the LCL3 family.

It is found in the mitochondrion. It localises to the membrane. The sequence is that of Probable endonuclease LCL3 (LCL3) from Schizophyllum commune (strain H4-8 / FGSC 9210) (Split gill fungus).